The primary structure comprises 88 residues: YcgL domain-containing protein NTHI1684 (88 aa).

Residues 1–85 form the YcgL domain; it reads MLCAIYKSKK…QDDGLFNSLS (85 aa).

This chain is YcgL domain-containing protein NTHI1684, found in Haemophilus influenzae (strain 86-028NP).